Here is a 242-residue protein sequence, read N- to C-terminus: Probable transcriptional regulatory protein NMA1902 (242 aa).

This sequence belongs to the TACO1 family.

It localises to the cytoplasm. This Neisseria meningitidis serogroup A / serotype 4A (strain DSM 15465 / Z2491) protein is Probable transcriptional regulatory protein NMA1902.